The chain runs to 1271 residues: Clustered mitochondria protein homolog (1271 aa).

TPR repeat units follow at residues 104 to 138 (RHKP…ELGE) and 502 to 535 (CYGL…KPHK). The Clu domain maps to 329–580 (DQSRPQLSIL…RSTPLDIDFI (252 aa)). Residues 729-763 (QEEKSKIEDNEKAIEEEKKEEKTEKKEEKEEKADE) show a composition bias toward basic and acidic residues. A disordered region spans residues 729–783 (QEEKSKIEDNEKAIEEEKKEEKTEKKEEKEEKADEEKSENEEDKTKPEEPSKGVF). TPR repeat units follow at residues 1067–1100 (ISSY…WDFV), 1109–1142 (VTTL…SEKI), and 1151–1184 (AMIH…FSRH). The disordered stretch occupies residues 1212 to 1271 (QAKDKNKPKKVKAPPVPPQATTKKSKNKSKMAQTQISKLHLNSSTRFSSSSRVKPRLKKK). A compositionally biased stretch (polar residues) spans 1241-1253 (KMAQTQISKLHLN). The span at 1254–1263 (SSTRFSSSSR) shows a compositional bias: low complexity.

The protein belongs to the CLU family. May associate with the eukaryotic translation initiation factor 3 (eIF-3) complex.

Its subcellular location is the cytoplasm. MRNA-binding protein involved in proper cytoplasmic distribution of mitochondria. The chain is Clustered mitochondria protein homolog from Meyerozyma guilliermondii (strain ATCC 6260 / CBS 566 / DSM 6381 / JCM 1539 / NBRC 10279 / NRRL Y-324) (Yeast).